The chain runs to 56 residues: Large ribosomal subunit protein bL32 (56 aa).

Residues M1–Q19 show a composition bias toward basic residues. A disordered region spans residues M1 to T22.

It belongs to the bacterial ribosomal protein bL32 family.

The polypeptide is Large ribosomal subunit protein bL32 (Cutibacterium acnes (strain DSM 16379 / KPA171202) (Propionibacterium acnes)).